The sequence spans 294 residues: 4-diphosphocytidyl-2-C-methyl-D-erythritol kinase (294 aa).

Residue K11 is part of the active site. 93–103 (PFGAGLGGGSS) contacts ATP. The active site involves D135.

The protein belongs to the GHMP kinase family. IspE subfamily.

It catalyses the reaction 4-CDP-2-C-methyl-D-erythritol + ATP = 4-CDP-2-C-methyl-D-erythritol 2-phosphate + ADP + H(+). It functions in the pathway isoprenoid biosynthesis; isopentenyl diphosphate biosynthesis via DXP pathway; isopentenyl diphosphate from 1-deoxy-D-xylulose 5-phosphate: step 3/6. Its function is as follows. Catalyzes the phosphorylation of the position 2 hydroxy group of 4-diphosphocytidyl-2C-methyl-D-erythritol. The chain is 4-diphosphocytidyl-2-C-methyl-D-erythritol kinase from Chlorobium phaeobacteroides (strain DSM 266 / SMG 266 / 2430).